A 469-amino-acid chain; its full sequence is MSAKPTTLYDKIWNDHLVHEAEDGTCLLYIDRHLVHEVTSPQAFEGLRTAGRKVHAPEKTLAVVDHNVPTTDRSKPNPDPESAEQIAALAENARDFGITYYNEFDKRQGVVHVIGPEQGFTLPGTTIVCGDSHTSTHGAFGALAHGIGTSEVEHVLATQTLIQKKAKNMRVTVDGQLPDGVTAKDVILAIIGEIGTAGGTGYVLEYAGDAIRSLSMEGRMTVCNMSIEGGARAGLIAPDAKAYEFLKGRPLAPKGEAWDAALRYWETLRSDDGAHFDHELKLDAAALPPIVTWGTSPEDVISVTGRVPNPADIADEAKRLSKERALAYMGLTPGTKITDIKIDRMFIGSCTNGRIEDLRAAAKVAEGKTVNANVNAIIVPGSGLVKEQAEAEGLDKIFIKAGFEWREPGCSMCLAMNPDKLAPEERCASTSNRNFEGRQGFKGRTHLVSPAMAAAAAIAGHFVDIRDWH.

Positions 350, 410, and 413 each coordinate [4Fe-4S] cluster.

This sequence belongs to the aconitase/IPM isomerase family. LeuC type 1 subfamily. Heterodimer of LeuC and LeuD. The cofactor is [4Fe-4S] cluster.

It catalyses the reaction (2R,3S)-3-isopropylmalate = (2S)-2-isopropylmalate. It participates in amino-acid biosynthesis; L-leucine biosynthesis; L-leucine from 3-methyl-2-oxobutanoate: step 2/4. Catalyzes the isomerization between 2-isopropylmalate and 3-isopropylmalate, via the formation of 2-isopropylmaleate. The chain is 3-isopropylmalate dehydratase large subunit from Rhodopseudomonas palustris (strain TIE-1).